We begin with the raw amino-acid sequence, 81 residues long: Photosystem I iron-sulfur center (81 aa).

2 consecutive 4Fe-4S ferredoxin-type domains span residues 2-31 (SHSV…MVSW) and 39-68 (IASA…VRVY). Residues Cys-11, Cys-14, Cys-17, Cys-21, Cys-48, Cys-51, Cys-54, and Cys-58 each coordinate [4Fe-4S] cluster.

The eukaryotic PSI reaction center is composed of at least 11 subunits. The cofactor is [4Fe-4S] cluster.

It localises to the plastid. The protein resides in the chloroplast thylakoid membrane. The enzyme catalyses reduced [plastocyanin] + hnu + oxidized [2Fe-2S]-[ferredoxin] = oxidized [plastocyanin] + reduced [2Fe-2S]-[ferredoxin]. Its function is as follows. Apoprotein for the two 4Fe-4S centers FA and FB of photosystem I (PSI); essential for photochemical activity. FB is the terminal electron acceptor of PSI, donating electrons to ferredoxin. The C-terminus interacts with PsaA/B/D and helps assemble the protein into the PSI complex. Required for binding of PsaD and PsaE to PSI. PSI is a plastocyanin/cytochrome c6-ferredoxin oxidoreductase, converting photonic excitation into a charge separation, which transfers an electron from the donor P700 chlorophyll pair to the spectroscopically characterized acceptors A0, A1, FX, FA and FB in turn. The sequence is that of Photosystem I iron-sulfur center from Rhodomonas salina (Cryptomonas salina).